Consider the following 129-residue polypeptide: UPF0102 protein CPS_4433 (129 aa).

Belongs to the UPF0102 family.

This chain is UPF0102 protein CPS_4433, found in Colwellia psychrerythraea (strain 34H / ATCC BAA-681) (Vibrio psychroerythus).